The following is a 178-amino-acid chain: Large ribosomal subunit protein uL10 (178 aa).

Belongs to the universal ribosomal protein uL10 family. In terms of assembly, part of the ribosomal stalk of the 50S ribosomal subunit. The N-terminus interacts with L11 and the large rRNA to form the base of the stalk. The C-terminus forms an elongated spine to which L12 dimers bind in a sequential fashion forming a multimeric L10(L12)X complex.

Forms part of the ribosomal stalk, playing a central role in the interaction of the ribosome with GTP-bound translation factors. This chain is Large ribosomal subunit protein uL10, found in Mycobacterium tuberculosis (strain ATCC 25177 / H37Ra).